A 228-amino-acid polypeptide reads, in one-letter code: Cytochrome c oxidase subunit 2 (228 aa).

Over 1–26 (MSTWANLGLQDSASPLMEQLIFFHDH) the chain is Mitochondrial intermembrane. Residues 27–48 (ALLILVMITVLVGYLMFMLFFN) form a helical membrane-spanning segment. The Mitochondrial matrix portion of the chain corresponds to 49 to 62 (NYVNRFLLHGQLIE). The chain crosses the membrane as a helical span at residues 63–82 (MIWTILPAIILLFIALPSLR). Residues 83-228 (LLYLLDEINE…FIKWISSNNS (146 aa)) lie on the Mitochondrial intermembrane side of the membrane. Cu cation contacts are provided by histidine 161, cysteine 196, glutamate 198, cysteine 200, histidine 204, and methionine 207. Glutamate 198 contacts Mg(2+).

The protein belongs to the cytochrome c oxidase subunit 2 family. In terms of assembly, component of the cytochrome c oxidase (complex IV, CIV), a multisubunit enzyme composed of a catalytic core of 3 subunits and several supernumerary subunits. The complex exists as a monomer or a dimer and forms supercomplexes (SCs) in the inner mitochondrial membrane with ubiquinol-cytochrome c oxidoreductase (cytochrome b-c1 complex, complex III, CIII). Cu cation serves as cofactor.

Its subcellular location is the mitochondrion inner membrane. It carries out the reaction 4 Fe(II)-[cytochrome c] + O2 + 8 H(+)(in) = 4 Fe(III)-[cytochrome c] + 2 H2O + 4 H(+)(out). Component of the cytochrome c oxidase, the last enzyme in the mitochondrial electron transport chain which drives oxidative phosphorylation. The respiratory chain contains 3 multisubunit complexes succinate dehydrogenase (complex II, CII), ubiquinol-cytochrome c oxidoreductase (cytochrome b-c1 complex, complex III, CIII) and cytochrome c oxidase (complex IV, CIV), that cooperate to transfer electrons derived from NADH and succinate to molecular oxygen, creating an electrochemical gradient over the inner membrane that drives transmembrane transport and the ATP synthase. Cytochrome c oxidase is the component of the respiratory chain that catalyzes the reduction of oxygen to water. Electrons originating from reduced cytochrome c in the intermembrane space (IMS) are transferred via the dinuclear copper A center (CU(A)) of subunit 2 and heme A of subunit 1 to the active site in subunit 1, a binuclear center (BNC) formed by heme A3 and copper B (CU(B)). The BNC reduces molecular oxygen to 2 water molecules using 4 electrons from cytochrome c in the IMS and 4 protons from the mitochondrial matrix. The polypeptide is Cytochrome c oxidase subunit 2 (mt:CoII) (Drosophila melanogaster (Fruit fly)).